The following is an 850-amino-acid chain: Protein translocase subunit SecA (850 aa).

Residues glutamine 87, 105-109, and aspartate 494 contribute to the ATP site; that span reads GEGKT. Zn(2+) contacts are provided by cysteine 834, cysteine 836, cysteine 845, and cysteine 846.

Belongs to the SecA family. Monomer and homodimer. Part of the essential Sec protein translocation apparatus which comprises SecA, SecYEG and auxiliary proteins SecDF-YajC and YidC. Zn(2+) serves as cofactor.

The protein localises to the cell inner membrane. It localises to the cytoplasm. It carries out the reaction ATP + H2O + cellular proteinSide 1 = ADP + phosphate + cellular proteinSide 2.. In terms of biological role, part of the Sec protein translocase complex. Interacts with the SecYEG preprotein conducting channel. Has a central role in coupling the hydrolysis of ATP to the transfer of proteins into and across the cell membrane, serving as an ATP-driven molecular motor driving the stepwise translocation of polypeptide chains across the membrane. The sequence is that of Protein translocase subunit SecA from Desulfotalea psychrophila (strain LSv54 / DSM 12343).